Consider the following 192-residue polypeptide: Elongation factor P (192 aa).

Position 38 is an N6-(3,6-diaminohexanoyl)-5-hydroxylysine (lysine 38).

The protein belongs to the elongation factor P family. In terms of processing, may be beta-lysylated on the epsilon-amino group of Lys-38 by the combined action of EpmA and EpmB, and then hydroxylated on the C5 position of the same residue by EpmC (if this protein is present). Lysylation is critical for the stimulatory effect of EF-P on peptide-bond formation. The lysylation moiety may extend toward the peptidyltransferase center and stabilize the terminal 3-CCA end of the tRNA. Hydroxylation of the C5 position on Lys-38 may allow additional potential stabilizing hydrogen-bond interactions with the P-tRNA.

Its subcellular location is the cytoplasm. It functions in the pathway protein biosynthesis; polypeptide chain elongation. In terms of biological role, involved in peptide bond synthesis. Alleviates ribosome stalling that occurs when 3 or more consecutive Pro residues or the sequence PPG is present in a protein, possibly by augmenting the peptidyl transferase activity of the ribosome. Modification of Lys-38 is required for alleviation. This Mannheimia succiniciproducens (strain KCTC 0769BP / MBEL55E) protein is Elongation factor P.